The following is a 266-amino-acid chain: Putative carbamate hydrolase RutD (266 aa).

The region spanning 14 to 119 (PVVVLSAGLG…LVNGWLSLSP (106 aa)) is the AB hydrolase-1 domain.

The protein belongs to the AB hydrolase superfamily. Hydrolase RutD family.

The enzyme catalyses carbamate + 2 H(+) = NH4(+) + CO2. Involved in pyrimidine catabolism. May facilitate the hydrolysis of carbamate, a reaction that can also occur spontaneously. The polypeptide is Putative carbamate hydrolase RutD (Klebsiella pneumoniae subsp. pneumoniae (strain ATCC 700721 / MGH 78578)).